Consider the following 585-residue polypeptide: Glutamate decarboxylase (585 aa).

The span at 35–56 (KSAVQSGHQGSNNMRDTSSQGM) shows a compositional bias: polar residues. Positions 35–60 (KSAVQSGHQGSNNMRDTSSQGMANKY) are disordered. N6-(pyridoxal phosphate)lysine is present on lysine 318.

This sequence belongs to the group II decarboxylase family. Pyridoxal 5'-phosphate serves as cofactor.

It carries out the reaction L-glutamate + H(+) = 4-aminobutanoate + CO2. This chain is Glutamate decarboxylase (GAD1), found in Saccharomyces cerevisiae (strain ATCC 204508 / S288c) (Baker's yeast).